A 1007-amino-acid chain; its full sequence is Serine/threonine-protein kinase PRP4 homolog (1007 aa).

A disordered region spans residues 1 to 104 (MAATEPPSLR…PAKRTKLDDL (104 aa)). Alanine 2 is subject to N-acetylalanine. Residues serine 8, serine 21, serine 24, and serine 33 each carry the phosphoserine modification. 2 stretches are compositionally biased toward basic residues: residues 40-60 (KHSRHKKKKHKHRSKHKKHKH) and 68-82 (KKHKHKHKHKKHKRK). Over residues 83 to 92 (EVLDASDKEG) the composition is skewed to basic and acidic residues. A phosphoserine mark is found at serine 88 and serine 94. An N6-acetyllysine; alternate modification is found at lysine 100. Lysine 100 is covalently cross-linked (Glycyl lysine isopeptide (Lys-Gly) (interchain with G-Cter in SUMO2); alternate). Lysine 112 is covalently cross-linked (Glycyl lysine isopeptide (Lys-Gly) (interchain with G-Cter in SUMO2)). Lysine 118 is covalently cross-linked (Glycyl lysine isopeptide (Lys-Gly) (interchain with G-Cter in SUMO2); alternate). Lysine 118 is covalently cross-linked (Glycyl lysine isopeptide (Lys-Gly) (interchain with G-Cter in SUMO1); alternate). Phosphoserine is present on serine 132. Phosphotyrosine is present on tyrosine 141. 2 disordered regions span residues 141-535 (YESG…EDEE) and 560-583 (NISVPSEPSSPQSSTRSRSPSPDD). Residues serine 143, serine 145, and serine 167 each carry the phosphoserine modification. Residues 158-169 (GNRSSTRSSSTR) show a composition bias toward low complexity. Residues lysine 171 and lysine 178 each participate in a glycyl lysine isopeptide (Lys-Gly) (interchain with G-Cter in SUMO2) cross-link. Basic residues-rich tracts occupy residues 180-203 (SAKKRSKSRSKERTRHRSDKRKSK) and 215-231 (RSKSKERRKSKSPSKRS). A phosphoserine mark is found at serine 240, serine 242, serine 258, serine 278, serine 292, and serine 294. Residues 248 to 271 (RSQEKVGKARSPADEKIKSEEKGK) are compositionally biased toward basic and acidic residues. Over residues 294–303 (SPVDLRDKSK) the composition is skewed to basic and acidic residues. The segment covering 304-315 (DRRSRSKERKSK) has biased composition (basic residues). Over residues 316–325 (RSEIDKEKKP) the composition is skewed to basic and acidic residues. Residues serine 328, serine 354, serine 356, serine 366, and serine 368 each carry the phosphoserine modification. A compositionally biased stretch (basic residues) spans 342–367 (PSRRPGRSPKRRSLSPKQRDKSRRSR). Threonine 385 is subject to Phosphothreonine. Position 387 is a phosphoserine (serine 387). Composition is skewed to basic and acidic residues over residues 395–408 (RSLERKRREPERRR) and 415–429 (RPRDDILGRCERSKD). Phosphoserine is present on residues serine 427, serine 431, and serine 437. Residues 438-497 (PSRRRSRSPIRRRSRSPLRRSRSPRRRSRSPRRRDRSRRSRSRLRRRSRSRGGHRRRSRS) are compositionally biased toward basic residues. Residues serine 518, serine 519, serine 520, serine 565, serine 569, serine 576, serine 578, and serine 580 each carry the phosphoserine modification. Residues 518 to 535 (SSSDDNLEDFDVEEEDEE) show a composition bias toward acidic residues. Over residues 562 to 581 (SVPSEPSSPQSSTRSRSPSP) the composition is skewed to low complexity. Glycyl lysine isopeptide (Lys-Gly) (interchain with G-Cter in SUMO2) cross-links involve residues lysine 593 and lysine 659. The 317-residue stretch at 687-1003 (YNVYGYTGQG…INQALQHAFI (317 aa)) folds into the Protein kinase domain. Residues 693–701 (TGQGVFSNV) and lysine 717 contribute to the ATP site. Lysine 717 bears the N6-acetyllysine mark. The active-site Proton acceptor is the aspartate 815. Residue tyrosine 849 is modified to Phosphotyrosine. A Phosphoserine modification is found at serine 852.

Belongs to the protein kinase superfamily. CMGC Ser/Thr protein kinase family. Interacts with CLK1 C-terminus. Associates with the U5 snRNP and NCOR1 deacetylase complexes. Identified in the spliceosome C complex. Phosphorylated by CLK1. Autophosphorylated; phosphorylation inhibits interaction with its targets, such as PRPF6 or SMARCA4.

Its subcellular location is the nucleus. The protein localises to the chromosome. It localises to the centromere. The protein resides in the kinetochore. The enzyme catalyses L-seryl-[protein] + ATP = O-phospho-L-seryl-[protein] + ADP + H(+). The catalysed reaction is L-threonyl-[protein] + ATP = O-phospho-L-threonyl-[protein] + ADP + H(+). Serine/threonine kinase involved in spliceosomal assembly as well as mitosis and signaling regulation. Connects chromatin mediated regulation of transcription and pre-mRNA splicing. During spliceosomal assembly, interacts with and phosphorylates PRPF6 and PRPF31, components of the U4/U6-U5 tri-small nuclear ribonucleoprotein (snRNP), to facilitate the formation of the spliceosome B complex. Plays a role in regulating transcription and the spindle assembly checkpoint (SAC). Associates with U5 snRNP and NCOR1 deacetylase complexes which may allow a coordination of pre-mRNA splicing with chromatin remodeling events involved in transcriptional regulation. Associates and probably phosphorylates SMARCA4 and NCOR1. Phosphorylates SRSF1. Associates with kinetochores during mitosis and is necessary for recruitment and maintenance of the checkpoint proteins such as MAD1L1 and MAD12L1 at the kinetochores. Phosphorylates and regulates the activity of the transcription factors such as ELK1 and KLF13. Phosphorylates nuclear YAP1 and WWTR1/TAZ which induces nuclear exclusion and regulates Hippo signaling pathway, involved in tissue growth control. In Rattus norvegicus (Rat), this protein is Serine/threonine-protein kinase PRP4 homolog (Prp4k).